Reading from the N-terminus, the 507-residue chain is ATP synthase subunit alpha, chloroplastic (507 aa).

Position 170–177 (170–177) interacts with ATP; that stretch reads GDRQTGKT.

It belongs to the ATPase alpha/beta chains family. F-type ATPases have 2 components, CF(1) - the catalytic core - and CF(0) - the membrane proton channel. CF(1) has five subunits: alpha(3), beta(3), gamma(1), delta(1), epsilon(1). CF(0) has four main subunits: a, b, b' and c.

Its subcellular location is the plastid. It is found in the chloroplast thylakoid membrane. It carries out the reaction ATP + H2O + 4 H(+)(in) = ADP + phosphate + 5 H(+)(out). Produces ATP from ADP in the presence of a proton gradient across the membrane. The alpha chain is a regulatory subunit. The polypeptide is ATP synthase subunit alpha, chloroplastic (Piper cenocladum (Ant piper)).